The following is a 282-amino-acid chain: Acetyl-coenzyme A carboxylase carboxyl transferase subunit beta (282 aa).

In terms of domain architecture, CoA carboxyltransferase N-terminal spans 26–282 (QWVKCPETGE…IIRLLNLLME (257 aa)).

The protein belongs to the AccD/PCCB family. As to quaternary structure, acetyl-CoA carboxylase is a heterohexamer composed of biotin carboxyl carrier protein (AccB), biotin carboxylase (AccC) and two subunits each of ACCase subunit alpha (AccA) and ACCase subunit beta (AccD).

Its subcellular location is the cytoplasm. The catalysed reaction is N(6)-carboxybiotinyl-L-lysyl-[protein] + acetyl-CoA = N(6)-biotinyl-L-lysyl-[protein] + malonyl-CoA. The protein operates within lipid metabolism; malonyl-CoA biosynthesis; malonyl-CoA from acetyl-CoA: step 1/1. Functionally, component of the acetyl coenzyme A carboxylase (ACC) complex. Biotin carboxylase (BC) catalyzes the carboxylation of biotin on its carrier protein (BCCP) and then the CO(2) group is transferred by the transcarboxylase to acetyl-CoA to form malonyl-CoA. The sequence is that of Acetyl-coenzyme A carboxylase carboxyl transferase subunit beta from Salinibacter ruber (strain DSM 13855 / M31).